Consider the following 118-residue polypeptide: Cell division protein FtsB (118 aa).

Residues 1 to 3 lie on the Cytoplasmic side of the membrane; sequence MRL. Residues 4–21 form a helical membrane-spanning segment; it reads LFLVLLVLLGLIQYPLWL. Over 22–118 the chain is Periplasmic; that stretch reads GKGGWFKVWD…PRPPATPPRR (97 aa). Residues 28 to 62 are a coiled coil; it reads KVWDLQRQVAEQRETNDGLRARNTALEAEVRDLAT. The segment at 88-118 is disordered; that stretch reads LPPGTPLPSDNSTPQASALSKPRPPATPPRR. Polar residues predominate over residues 95–105; sequence PSDNSTPQASA. A compositionally biased stretch (pro residues) spans 109-118; it reads PRPPATPPRR.

This sequence belongs to the FtsB family. Part of a complex composed of FtsB, FtsL and FtsQ.

It localises to the cell inner membrane. In terms of biological role, essential cell division protein. May link together the upstream cell division proteins, which are predominantly cytoplasmic, with the downstream cell division proteins, which are predominantly periplasmic. This is Cell division protein FtsB from Bordetella bronchiseptica (strain ATCC BAA-588 / NCTC 13252 / RB50) (Alcaligenes bronchisepticus).